The chain runs to 298 residues: MGKQDILWGIAPIGWRNDDMPEIGAGNTLQHLLSDIVVAGFQGTEVGGFFPEPSVLNKELALRNLRIAGKWFSSFIIQDGIEKMAEQFTEHCDYLQKVGADVAIVSEQTYSVQGLDIDVFKEKPHFSDEEWDTLCQGLNRLGKIAGEYGLDLTFHHHLGTGVQTAEEVDRLMDGTDPRYVHLLYDTGHAYISDGDYMTILNKHMDRIRHVHFKDARFDIMERCRQEGKSFRQSFLQGIFTVPGDGCIDFTEVYRTLVRHDYSGWIVIEAEQDPAVANPLEYALIARKYIDSELLDPAN.

The protein belongs to the IolE/MocC family. Glutathione serves as cofactor. Co(2+) is required as a cofactor. The cofactor is Mn(2+).

The catalysed reaction is scyllo-inosose = 3D-3,5/4-trihydroxycyclohexane-1,2-dione + H2O. It functions in the pathway polyol metabolism; myo-inositol degradation into acetyl-CoA; acetyl-CoA from myo-inositol: step 2/7. Functionally, catalyzes the dehydration of inosose (2-keto-myo-inositol, 2KMI or 2,4,6/3,5-pentahydroxycyclohexanone) to 3D-(3,5/4)-trihydroxycyclohexane-1,2-dione (D-2,3-diketo-4-deoxy-epi-inositol). The sequence is that of Inosose dehydratase from Bacillus velezensis (strain DSM 23117 / BGSC 10A6 / LMG 26770 / FZB42) (Bacillus amyloliquefaciens subsp. plantarum).